We begin with the raw amino-acid sequence, 310 residues long: Prephenate dehydratase (310 aa).

Positions 3–190 (RIAYLGPEGT…ARTRFVLVGL (188 aa)) constitute a Prephenate dehydratase domain. Residues 204-281 (AVVLRLVNEP…VDVRYLGSWP (78 aa)) enclose the ACT domain.

In terms of assembly, homodimer.

It catalyses the reaction prephenate + H(+) = 3-phenylpyruvate + CO2 + H2O. It functions in the pathway amino-acid biosynthesis; L-phenylalanine biosynthesis; phenylpyruvate from prephenate: step 1/1. The polypeptide is Prephenate dehydratase (pheA) (Mycolicibacterium smegmatis (strain ATCC 700084 / mc(2)155) (Mycobacterium smegmatis)).